A 356-amino-acid polypeptide reads, in one-letter code: 3-isopropylmalate dehydrogenase (356 aa).

The substrate site is built by arginine 90, arginine 100, arginine 128, and aspartate 222. Mg(2+) is bound by residues aspartate 222, aspartate 246, and aspartate 250. 280 to 292 (GSAPDIAGKGVAN) is a binding site for NAD(+).

This sequence belongs to the isocitrate and isopropylmalate dehydrogenases family. LeuB type 1 subfamily. Homodimer. It depends on Mg(2+) as a cofactor. The cofactor is Mn(2+).

The protein localises to the cytoplasm. The enzyme catalyses (2R,3S)-3-isopropylmalate + NAD(+) = 4-methyl-2-oxopentanoate + CO2 + NADH. It participates in amino-acid biosynthesis; L-leucine biosynthesis; L-leucine from 3-methyl-2-oxobutanoate: step 3/4. Functionally, catalyzes the oxidation of 3-carboxy-2-hydroxy-4-methylpentanoate (3-isopropylmalate) to 3-carboxy-4-methyl-2-oxopentanoate. The product decarboxylates to 4-methyl-2 oxopentanoate. The sequence is that of 3-isopropylmalate dehydrogenase from Albidiferax ferrireducens (strain ATCC BAA-621 / DSM 15236 / T118) (Rhodoferax ferrireducens).